The sequence spans 186 residues: Elongation factor P (186 aa).

It belongs to the elongation factor P family.

It is found in the cytoplasm. The protein operates within protein biosynthesis; polypeptide chain elongation. Its function is as follows. Involved in peptide bond synthesis. Stimulates efficient translation and peptide-bond synthesis on native or reconstituted 70S ribosomes in vitro. Probably functions indirectly by altering the affinity of the ribosome for aminoacyl-tRNA, thus increasing their reactivity as acceptors for peptidyl transferase. The sequence is that of Elongation factor P from Shewanella piezotolerans (strain WP3 / JCM 13877).